The chain runs to 139 residues: METKWLLSKVPDDKSRFEIELEFVQMLSNPWYLNFLAQHKYFEDEAFLQYLEYMEYWREPEYVKFIIYPTCLHMLTLLKNPQFRNDISRADLSKQVNDEIYYEWLGKGLQQYGSADDATLSQPQQEEDEKKVDVKKENE.

Positions 115–139 (ADDATLSQPQQEEDEKKVDVKKENE) are disordered. The span at 128–139 (DEKKVDVKKENE) shows a compositional bias: basic and acidic residues.

It belongs to the Mediator complex subunit 31 family. As to quaternary structure, component of the Mediator complex.

Its subcellular location is the nucleus. Functionally, component of the Mediator complex, a coactivator involved in the regulated transcription of nearly all RNA polymerase II-dependent genes. Mediator functions as a bridge to convey information from gene-specific regulatory proteins to the basal RNA polymerase II transcription machinery. Mediator is recruited to promoters by direct interactions with regulatory proteins and serves as a scaffold for the assembly of a functional preinitiation complex with RNA polymerase II and the general transcription factors. This Schizosaccharomyces pombe (strain 972 / ATCC 24843) (Fission yeast) protein is Mediator of RNA polymerase II transcription subunit 31 (med31).